We begin with the raw amino-acid sequence, 457 residues long: Probable mitochondrial-processing peptidase subunit beta (457 aa).

Histidine 66 serves as a coordination point for Zn(2+). Glutamate 69 acts as the Proton acceptor in catalysis. Zn(2+) contacts are provided by histidine 70 and glutamate 146.

Belongs to the peptidase M16 family. Heterodimer of mas2 (alpha) and qcr1 (beta) subunits, forming the mitochondrial processing protease (MPP) in which mas2 is involved in substrate recognition and binding and qcr1 is the catalytic subunit. Zn(2+) serves as cofactor.

The protein resides in the mitochondrion matrix. It catalyses the reaction Release of N-terminal transit peptides from precursor proteins imported into the mitochondrion, typically with Arg in position P2.. With respect to regulation, binding to mas2 is required for catalytic activity. Functionally, catalytic subunit of the essential mitochondrial processing protease (MPP), which cleaves the mitochondrial sequence off newly imported precursors proteins. Preferentially, cleaves after an arginine at position P2. The sequence is that of Probable mitochondrial-processing peptidase subunit beta (qcr1) from Schizosaccharomyces pombe (strain 972 / ATCC 24843) (Fission yeast).